The chain runs to 513 residues: ATP synthase subunit alpha (513 aa).

Position 169–176 (169–176 (GDRQTGKT)) interacts with ATP.

It belongs to the ATPase alpha/beta chains family. As to quaternary structure, F-type ATPases have 2 components, CF(1) - the catalytic core - and CF(0) - the membrane proton channel. CF(1) has five subunits: alpha(3), beta(3), gamma(1), delta(1), epsilon(1). CF(0) has three main subunits: a(1), b(2) and c(9-12). The alpha and beta chains form an alternating ring which encloses part of the gamma chain. CF(1) is attached to CF(0) by a central stalk formed by the gamma and epsilon chains, while a peripheral stalk is formed by the delta and b chains.

The protein localises to the cell inner membrane. The enzyme catalyses ATP + H2O + 4 H(+)(in) = ADP + phosphate + 5 H(+)(out). In terms of biological role, produces ATP from ADP in the presence of a proton gradient across the membrane. The alpha chain is a regulatory subunit. The protein is ATP synthase subunit alpha of Ruthia magnifica subsp. Calyptogena magnifica.